Consider the following 90-residue polypeptide: MARTVHCIKLGKEAEGLDFAPYPGDLGKRIYDNVSKQAWADWIKHQTMLVNENRLNLADARARQYLARQMENHFFGSGADAAAGYVPPSA.

It belongs to the Fe(2+)-trafficking protein family.

Could be a mediator in iron transactions between iron acquisition and iron-requiring processes, such as synthesis and/or repair of Fe-S clusters in biosynthetic enzymes. The protein is Probable Fe(2+)-trafficking protein of Acidovorax ebreus (strain TPSY) (Diaphorobacter sp. (strain TPSY)).